A 349-amino-acid polypeptide reads, in one-letter code: Nuclear distribution protein nudE homolog 1-A (349 aa).

Positions 22–189 (VAMKYKQCSE…ELAVQQKQEK (168 aa)) form a coiled coil.

The protein belongs to the nudE family. In terms of assembly, self-associates. Interacts with pafah1b1. In terms of processing, phosphorylated in mitosis.

It localises to the cytoplasm. The protein resides in the cytoskeleton. The protein localises to the microtubule organizing center. Its subcellular location is the centrosome. It is found in the spindle. It localises to the chromosome. The protein resides in the centromere. The protein localises to the kinetochore. Its subcellular location is the cleavage furrow. It is found in the cytoplasmic vesicle membrane. Required for centrosome duplication and formation and function of the mitotic spindle. The chain is Nuclear distribution protein nudE homolog 1-A (nde1-a) from Xenopus laevis (African clawed frog).